Consider the following 469-residue polypeptide: Glutamate--tRNA ligase (469 aa).

A 'HIGH' region motif is present at residues 9 to 19; the sequence is PSPTGFLHVGG. Positions 98, 100, 125, and 127 each coordinate Zn(2+). The 'KMSKS' region signature appears at 236–240; the sequence is KLSKR. Position 239 (Lys239) interacts with ATP.

This sequence belongs to the class-I aminoacyl-tRNA synthetase family. Glutamate--tRNA ligase type 1 subfamily. In terms of assembly, monomer. The cofactor is Zn(2+).

It localises to the cytoplasm. The catalysed reaction is tRNA(Glu) + L-glutamate + ATP = L-glutamyl-tRNA(Glu) + AMP + diphosphate. Functionally, catalyzes the attachment of glutamate to tRNA(Glu) in a two-step reaction: glutamate is first activated by ATP to form Glu-AMP and then transferred to the acceptor end of tRNA(Glu). The chain is Glutamate--tRNA ligase from Shewanella baltica (strain OS155 / ATCC BAA-1091).